The sequence spans 156 residues: 3-hydroxyacyl-[acyl-carrier-protein] dehydratase FabZ (156 aa).

The active site involves His-57.

It belongs to the thioester dehydratase family. FabZ subfamily.

The protein resides in the cytoplasm. It carries out the reaction a (3R)-hydroxyacyl-[ACP] = a (2E)-enoyl-[ACP] + H2O. In terms of biological role, involved in unsaturated fatty acids biosynthesis. Catalyzes the dehydration of short chain beta-hydroxyacyl-ACPs and long chain saturated and unsaturated beta-hydroxyacyl-ACPs. The sequence is that of 3-hydroxyacyl-[acyl-carrier-protein] dehydratase FabZ from Anaeromyxobacter dehalogenans (strain 2CP-C).